The sequence spans 495 residues: Trimethylamine methyltransferase MttB2 (495 aa).

Position 334 (Pyl334) is a non-standard amino acid, pyrrolysine.

Belongs to the trimethylamine methyltransferase family. In terms of assembly, can form a complex with MttC.

The catalysed reaction is Co(I)-[trimethylamine-specific corrinoid protein] + trimethylamine + H(+) = methyl-Co(III)-[trimethylamine-specific corrinoid protein] + dimethylamine. The protein operates within one-carbon metabolism; methanogenesis from trimethylamine. Its function is as follows. Catalyzes the transfer of a methyl group from trimethylamine to the corrinoid cofactor of MttC. This chain is Trimethylamine methyltransferase MttB2 (mttB2), found in Methanosarcina mazei (strain ATCC BAA-159 / DSM 3647 / Goe1 / Go1 / JCM 11833 / OCM 88) (Methanosarcina frisia).